A 152-amino-acid polypeptide reads, in one-letter code: Large ribosomal subunit protein eL29 (152 aa).

Over residues 1-26 (MAKSKNHTTHNQSRKWHRNGIKKPRS) the composition is skewed to basic residues. Residues 1–32 (MAKSKNHTTHNQSRKWHRNGIKKPRSQRYESL) form a disordered region. Position 5 is an N6-methyllysine (Lys-5). Ser-31 is modified (phosphoserine). Lys-33 is subject to N6-acetyllysine. Residues 119–152 (CRPKSQAKASTKAKPPAAAAPAAKGAQAPTKAPE) form a disordered region. Over residues 121 to 152 (PKSQAKASTKAKPPAAAAPAAKGAQAPTKAPE) the composition is skewed to low complexity.

It belongs to the eukaryotic ribosomal protein eL29 family. In terms of assembly, component of the large ribosomal subunit.

It localises to the cytoplasm. In terms of biological role, component of the large ribosomal subunit. The ribosome is a large ribonucleoprotein complex responsible for the synthesis of proteins in the cell. This Bos taurus (Bovine) protein is Large ribosomal subunit protein eL29 (RPL29).